The primary structure comprises 118 residues: Small ribosomal subunit protein uS13 (118 aa).

The tract at residues 94 to 118 (GLPLRGQRTRTNARTRKGPRKAIRK) is disordered.

This sequence belongs to the universal ribosomal protein uS13 family. As to quaternary structure, part of the 30S ribosomal subunit. Forms a loose heterodimer with protein S19. Forms two bridges to the 50S subunit in the 70S ribosome.

Located at the top of the head of the 30S subunit, it contacts several helices of the 16S rRNA. In the 70S ribosome it contacts the 23S rRNA (bridge B1a) and protein L5 of the 50S subunit (bridge B1b), connecting the 2 subunits; these bridges are implicated in subunit movement. Contacts the tRNAs in the A and P-sites. The polypeptide is Small ribosomal subunit protein uS13 (Stenotrophomonas maltophilia (strain R551-3)).